Here is a 324-residue protein sequence, read N- to C-terminus: Polyketide biosynthesis acyltransferase homolog PksD (324 aa).

Serine 99 is a catalytic residue.

It localises to the cytoplasm. Its pathway is antibiotic biosynthesis; bacillaene biosynthesis. Probably involved in some intermediate steps for the synthesis of the antibiotic polyketide bacillaene which is involved in secondary metabolism. This is Polyketide biosynthesis acyltransferase homolog PksD (pksD) from Bacillus subtilis (strain 168).